The following is a 341-amino-acid chain: Phosphoribosylformylglycinamidine cyclo-ligase (341 aa).

The protein belongs to the AIR synthase family.

Its subcellular location is the cytoplasm. The catalysed reaction is 2-formamido-N(1)-(5-O-phospho-beta-D-ribosyl)acetamidine + ATP = 5-amino-1-(5-phospho-beta-D-ribosyl)imidazole + ADP + phosphate + H(+). It participates in purine metabolism; IMP biosynthesis via de novo pathway; 5-amino-1-(5-phospho-D-ribosyl)imidazole from N(2)-formyl-N(1)-(5-phospho-D-ribosyl)glycinamide: step 2/2. In Lachnospira eligens (strain ATCC 27750 / DSM 3376 / VPI C15-48 / C15-B4) (Eubacterium eligens), this protein is Phosphoribosylformylglycinamidine cyclo-ligase.